The chain runs to 401 residues: Calcium-responsive transcription coactivator (401 aa).

The N-terminal auto-inhibitory domain; necessary for interaction with SMARCA4/BRG1 stretch occupies residues 1 to 148 (MSVAFASARP…TLPTTSMSMS (148 aa)). Positions 50–53 (YQQI) match the SH2-binding motif. Disordered regions lie at residues 72–171 (QSLL…VPMQ) and 214–401 (TRAR…NYQQ). Positions 85–106 (LGPGALSQSGSSQGLHPQGSLS) are enriched in low complexity. Positions 128–137 (NHVSMQQTAQ) are enriched in polar residues. A compositionally biased stretch (low complexity) spans 138–149 (STLPTTSMSMSG). Residues 149–237 (GSGHGTGPGY…GGSMMGQRPM (89 aa)) form a methionine-rich intra-molecular domain region. The MFD domain stretch occupies residues 251–322 (YLGQEEYYSE…SQYSQQQAGY (72 aa)). Polar residues-rich tracts occupy residues 260-276 (EQYS…SQQY) and 285-294 (AYQQSSYTEQ). Residues 295–304 (SYDRSFEDPT) are compositionally biased toward basic and acidic residues. Positions 310-374 (GGNSQYSQQQ…QGQGQQYGSY (65 aa)) are enriched in low complexity. Positions 339-401 (NQQSYPGQQQ…EQGQYGNYQQ (63 aa)) are necessary for nuclear localization. The SH2-binding signature appears at 358-361 (SQYS). Residues 375–387 (RTSQTGPSAQQQR) are compositionally biased toward polar residues. Positions 376–384 (TSQTGPSAQ) match the SH3-binding motif. The span at 389–401 (YGYEQGQYGNYQQ) shows a compositional bias: low complexity. Positions 392–401 (EQGQYGNYQQ) are necessary for interaction with CREBBP and for the recruitment of CREBBP to the nuclear bodies. The short motif at 396 to 399 (YGNY) is the SH2-binding element.

The protein belongs to the SS18 family. In terms of assembly, homodimer. Dimerization may be necessary for its function in neuronal dendritic development. Interacts (via C-terminus) with CREBBP (via N-terminus), EP300 and SMARCA4/BRG1. Interacts with the nBAF complex. Association with CREBBP facilitates transcription while the association with SMARCA4/BRG1 suppresses CREST-mediated transcription in resting neurons. In terms of tissue distribution, brain (at protein level). Also found in the heart, liver, kidney and testis.

It localises to the nucleus. It is found in the chromosome. The protein resides in the centromere. The protein localises to the kinetochore. Transcriptional activator which is required for calcium-dependent dendritic growth and branching in cortical neurons. Recruits CREB-binding protein (CREBBP) to nuclear bodies. Component of the CREST-BRG1 complex, a multiprotein complex that regulates promoter activation by orchestrating a calcium-dependent release of a repressor complex and a recruitment of an activator complex. In resting neurons, transcription of the c-FOS promoter is inhibited by BRG1-dependent recruitment of a phospho-RB1-HDAC1 repressor complex. Upon calcium influx, RB1 is dephosphorylated by calcineurin, which leads to release of the repressor complex. At the same time, there is increased recruitment of CREBBP to the promoter by a CREST-dependent mechanism, which leads to transcriptional activation. The CREST-BRG1 complex also binds to the NR2B promoter, and activity-dependent induction of NR2B expression involves a release of HDAC1 and recruitment of CREBBP. The protein is Calcium-responsive transcription coactivator (Ss18l1) of Rattus norvegicus (Rat).